Consider the following 238-residue polypeptide: Ribonuclease PH (238 aa).

Phosphate is bound by residues arginine 86 and 124 to 126 (GTR).

The protein belongs to the RNase PH family. As to quaternary structure, homohexameric ring arranged as a trimer of dimers.

It catalyses the reaction tRNA(n+1) + phosphate = tRNA(n) + a ribonucleoside 5'-diphosphate. In terms of biological role, phosphorolytic 3'-5' exoribonuclease that plays an important role in tRNA 3'-end maturation. Removes nucleotide residues following the 3'-CCA terminus of tRNAs; can also add nucleotides to the ends of RNA molecules by using nucleoside diphosphates as substrates, but this may not be physiologically important. Probably plays a role in initiation of 16S rRNA degradation (leading to ribosome degradation) during starvation. The protein is Ribonuclease PH of Proteus mirabilis (strain HI4320).